The following is a 321-amino-acid chain: Ribose-phosphate pyrophosphokinase (321 aa).

ATP contacts are provided by residues 44 to 46 (DGE) and 103 to 104 (RQ). Mg(2+) is bound by residues H137 and D179. K202 is an active-site residue. D-ribose 5-phosphate-binding positions include R204, D228, and 232-236 (DTAGT).

This sequence belongs to the ribose-phosphate pyrophosphokinase family. Class I subfamily. Homohexamer. Requires Mg(2+) as cofactor.

The protein localises to the cytoplasm. The enzyme catalyses D-ribose 5-phosphate + ATP = 5-phospho-alpha-D-ribose 1-diphosphate + AMP + H(+). It participates in metabolic intermediate biosynthesis; 5-phospho-alpha-D-ribose 1-diphosphate biosynthesis; 5-phospho-alpha-D-ribose 1-diphosphate from D-ribose 5-phosphate (route I): step 1/1. Involved in the biosynthesis of the central metabolite phospho-alpha-D-ribosyl-1-pyrophosphate (PRPP) via the transfer of pyrophosphoryl group from ATP to 1-hydroxyl of ribose-5-phosphate (Rib-5-P). The sequence is that of Ribose-phosphate pyrophosphokinase from Staphylococcus epidermidis (strain ATCC 35984 / DSM 28319 / BCRC 17069 / CCUG 31568 / BM 3577 / RP62A).